The primary structure comprises 340 residues: Cell growth-regulated gene 1 protein (340 aa).

This sequence belongs to the SMP-30/CGR1 family.

In terms of biological role, involved in the cell growth regulation. The protein is Cell growth-regulated gene 1 protein (CGR1) of Candida albicans (strain SC5314 / ATCC MYA-2876) (Yeast).